The primary structure comprises 81 residues: D-alanyl carrier protein (81 aa).

Positions 1–81 (MADEAIKNGV…KIIAKVEQAQ (81 aa)) constitute a Carrier domain. An O-(pantetheine 4'-phosphoryl)serine modification is found at Ser-39.

It belongs to the DltC family. In terms of processing, 4'-phosphopantetheine is transferred from CoA to a specific serine of apo-DCP.

It localises to the cytoplasm. The protein operates within cell wall biogenesis; lipoteichoic acid biosynthesis. In terms of biological role, carrier protein involved in the D-alanylation of lipoteichoic acid (LTA). The loading of thioester-linked D-alanine onto DltC is catalyzed by D-alanine--D-alanyl carrier protein ligase DltA. The DltC-carried D-alanyl group is further transferred to cell membrane phosphatidylglycerol (PG) by forming an ester bond, probably catalyzed by DltD. D-alanylation of LTA plays an important role in modulating the properties of the cell wall in Gram-positive bacteria, influencing the net charge of the cell wall. This is D-alanyl carrier protein from Lacticaseibacillus casei (strain BL23) (Lactobacillus casei).